Here is a 968-residue protein sequence, read N- to C-terminus: Leucine--tRNA ligase (968 aa).

The span at 1–13 shows a compositional bias: polar residues; sequence MTETPTGTQSSRE. Residues 1 to 22 form a disordered region; the sequence is MTETPTGTQSSRETAADDTPRH. Positions 75–86 match the 'HIGH' region motif; sequence PYPSGEGLHVGH. The 'KMSKS' region signature appears at 741–745; sequence KIGKS. Lys744 contributes to the ATP binding site.

The protein belongs to the class-I aminoacyl-tRNA synthetase family.

Its subcellular location is the cytoplasm. It carries out the reaction tRNA(Leu) + L-leucine + ATP = L-leucyl-tRNA(Leu) + AMP + diphosphate. In Mycolicibacterium vanbaalenii (strain DSM 7251 / JCM 13017 / BCRC 16820 / KCTC 9966 / NRRL B-24157 / PYR-1) (Mycobacterium vanbaalenii), this protein is Leucine--tRNA ligase.